A 215-amino-acid chain; its full sequence is Cytochrome b6 (215 aa).

The helical transmembrane segment at 32–52 (IFYCLGGITLTCFLVQVATGF) threads the bilayer. Residue Cys-35 participates in heme c binding. 2 residues coordinate heme b: His-86 and His-100. A run of 3 helical transmembrane segments spans residues 90–110 (ASMM…TGGF), 116–136 (LTWV…VTGY), and 186–206 (LHTF…FPMI). Residues His-187 and His-202 each coordinate heme b.

Belongs to the cytochrome b family. PetB subfamily. In terms of assembly, the 4 large subunits of the cytochrome b6-f complex are cytochrome b6, subunit IV (17 kDa polypeptide, PetD), cytochrome f and the Rieske protein, while the 4 small subunits are PetG, PetL, PetM and PetN. The complex functions as a dimer. It depends on heme b as a cofactor. The cofactor is heme c.

The protein resides in the plastid. It is found in the chloroplast thylakoid membrane. Functionally, component of the cytochrome b6-f complex, which mediates electron transfer between photosystem II (PSII) and photosystem I (PSI), cyclic electron flow around PSI, and state transitions. In Helianthus annuus (Common sunflower), this protein is Cytochrome b6.